Here is a 66-residue protein sequence, read N- to C-terminus: Conotoxin Cl14.1a (66 aa).

Residues 1–19 form the signal peptide; sequence MNVTAMFIVLLLTMPLTDG. Residues 20–49 constitute a propeptide that is removed on maturation; that stretch reads FNIRAINGGELFGLVQRDAGNALDHGFYRR.

The protein belongs to the conotoxin L superfamily. In terms of processing, contains 2 disulfide bonds. As to expression, expressed by the venom duct.

Its subcellular location is the secreted. In terms of biological role, probable neurotoxin with unknown target. Possibly targets ion channels. This peptide could be considered as an apoptosis activator in some cancers (tested on lung and breast cancer cell lines). Provokes the decrease of H1299 lung cancer cells viability after 24 hours treatment, and induces a high Bax/Bcl-2 ratio, which suggests that this peptide can activate apoptosis in H1299 cells. In addition, H1299 and H1437 lung cancer cell lines treated with this peptide have decreased cell viability, activated caspases, and reduced expression of the pro-survival protein NF-kappa-B (NFKB1), indicating activation of apoptosis. In synergy with MicroRNA-101-3p, this synthetic peptide inhibits breast cancer cells (SK-BR-3 and MCF-7) migration, invasion, and proliferation through suppressing the expression of the methyltransferase EZH2. In parallel, this synergy treatment is able to promote the apoptosis of breast cancer cells. Against microbes, this synthetic toxin (at micromolar concentrations) lowers viability and inhibits host cell invasion by the opportunistic parasite Toxoplasma gondii (tachyzoite form). In addition, it permits T.gondii intracellular replication to decrease while viability of the host cell is unaffected. This is Conotoxin Cl14.1a from Californiconus californicus (California cone).